Reading from the N-terminus, the 503-residue chain is Beta-amylase Tri a 17 (503 aa).

Asp-51, His-91, and Asp-99 together coordinate substrate. Glu-184 functions as the Proton donor in the catalytic mechanism. Positions 293, 298, and 340 each coordinate substrate. Glu-378 (proton acceptor) is an active-site residue. Substrate is bound by residues 379–380 (NA) and Arg-418.

This sequence belongs to the glycosyl hydrolase 14 family.

The enzyme catalyses Hydrolysis of (1-&gt;4)-alpha-D-glucosidic linkages in polysaccharides so as to remove successive maltose units from the non-reducing ends of the chains.. The protein is Beta-amylase Tri a 17 (BMY1) of Triticum aestivum (Wheat).